The sequence spans 479 residues: UDP-N-acetylmuramate--L-alanine ligase (479 aa).

126–132 contacts ATP; that stretch reads GTHGKTT.

This sequence belongs to the MurCDEF family.

The protein localises to the cytoplasm. It carries out the reaction UDP-N-acetyl-alpha-D-muramate + L-alanine + ATP = UDP-N-acetyl-alpha-D-muramoyl-L-alanine + ADP + phosphate + H(+). Its pathway is cell wall biogenesis; peptidoglycan biosynthesis. Cell wall formation. The protein is UDP-N-acetylmuramate--L-alanine ligase of Alkalilimnicola ehrlichii (strain ATCC BAA-1101 / DSM 17681 / MLHE-1).